The sequence spans 337 residues: Annexin E1 (337 aa).

Annexin repeat units follow at residues 10-80 (TGVT…MLYK), 81-154 (PRAQ…AVAT), 161-238 (DTHE…LAHD), and 242-312 (DPCC…LLWE).

The protein belongs to the annexin family.

Its subcellular location is the cell projection. The protein localises to the cilium. It is found in the flagellum. May function as a calcium-regulated structural element linking phospholipid bilayer and underlying axoneme. The protein is Annexin E1 (ANXE1) of Giardia intestinalis (Giardia lamblia).